The following is a 275-amino-acid chain: Large ribosomal subunit protein uL2 (275 aa).

Residues 218 to 275 (RPQTRGSAMNPIDHPHGGGEGKTNSGRHPVSPWGMPTKGYKTRKKKASDKLIISKRKK) are disordered. The segment covering 257 to 275 (YKTRKKKASDKLIISKRKK) has biased composition (basic residues).

The protein belongs to the universal ribosomal protein uL2 family. In terms of assembly, part of the 50S ribosomal subunit. Forms a bridge to the 30S subunit in the 70S ribosome.

Functionally, one of the primary rRNA binding proteins. Required for association of the 30S and 50S subunits to form the 70S ribosome, for tRNA binding and peptide bond formation. It has been suggested to have peptidyltransferase activity; this is somewhat controversial. Makes several contacts with the 16S rRNA in the 70S ribosome. In Sulfurovum sp. (strain NBC37-1), this protein is Large ribosomal subunit protein uL2.